The sequence spans 200 residues: Phospholipase A2 inhibitor gamma subunit A (200 aa).

Residues Met-1 to Ser-19 form the signal peptide. Disulfide bonds link Cys-22–Cys-46, Cys-25–Cys-32, Cys-39–Cys-67, Cys-73–Cys-94, Cys-95–Cys-100, Cys-118–Cys-143, Cys-136–Cys-165, and Cys-169–Cys-191. The N-linked (GlcNAc...) asparagine glycan is linked to Asn-176.

It belongs to the CNF-like-inhibitor family. Occurs as a mixture of oligomers. Tetrameric arrangement appears to be the predominant quaternary structure. Expressed by the liver.

It is found in the secreted. Its function is as follows. Inhibits the enzymatic activity of phospholipase A2 (PA2). The sequence is that of Phospholipase A2 inhibitor gamma subunit A from Gloydius brevicaudus siniticus (Chinese mamushi).